The chain runs to 230 residues: Ribose-5-phosphate isomerase A (230 aa).

Substrate contacts are provided by residues 31-34 (TGST), 88-91 (DGSD), and 101-104 (KGGG). Glu110 acts as the Proton acceptor in catalysis. A substrate-binding site is contributed by Lys128.

Belongs to the ribose 5-phosphate isomerase family. In terms of assembly, homodimer.

It catalyses the reaction aldehydo-D-ribose 5-phosphate = D-ribulose 5-phosphate. It participates in carbohydrate degradation; pentose phosphate pathway; D-ribose 5-phosphate from D-ribulose 5-phosphate (non-oxidative stage): step 1/1. In terms of biological role, catalyzes the reversible conversion of ribose-5-phosphate to ribulose 5-phosphate. This Lactobacillus acidophilus (strain ATCC 700396 / NCK56 / N2 / NCFM) protein is Ribose-5-phosphate isomerase A.